A 396-amino-acid chain; its full sequence is Lipid-A-disaccharide synthase (396 aa).

The protein belongs to the LpxB family.

It carries out the reaction a lipid X + a UDP-2-N,3-O-bis[(3R)-3-hydroxyacyl]-alpha-D-glucosamine = a lipid A disaccharide + UDP + H(+). It functions in the pathway bacterial outer membrane biogenesis; LPS lipid A biosynthesis. Its function is as follows. Condensation of UDP-2,3-diacylglucosamine and 2,3-diacylglucosamine-1-phosphate to form lipid A disaccharide, a precursor of lipid A, a phosphorylated glycolipid that anchors the lipopolysaccharide to the outer membrane of the cell. This is Lipid-A-disaccharide synthase from Hahella chejuensis (strain KCTC 2396).